Here is a 208-residue protein sequence, read N- to C-terminus: Ribosomal RNA large subunit methyltransferase E (208 aa).

Gly-62, Trp-64, Asp-82, Asp-98, and Asp-123 together coordinate S-adenosyl-L-methionine. The active-site Proton acceptor is the Lys-163.

The protein belongs to the class I-like SAM-binding methyltransferase superfamily. RNA methyltransferase RlmE family.

It localises to the cytoplasm. It catalyses the reaction uridine(2552) in 23S rRNA + S-adenosyl-L-methionine = 2'-O-methyluridine(2552) in 23S rRNA + S-adenosyl-L-homocysteine + H(+). Its function is as follows. Specifically methylates the uridine in position 2552 of 23S rRNA at the 2'-O position of the ribose in the fully assembled 50S ribosomal subunit. The protein is Ribosomal RNA large subunit methyltransferase E of Idiomarina loihiensis (strain ATCC BAA-735 / DSM 15497 / L2-TR).